The chain runs to 656 residues: Chromosomal replication initiator protein DnaA (656 aa).

Residues 1–100 are domain I, interacts with DnaA modulators; that stretch reads MADVPADLAA…TAGEPAGPAP (100 aa). The segment at 91–313 is disordered; sequence TAGEPAGPAP…PAPATGPGEP (223 aa). Pro residues predominate over residues 97 to 109; sequence GPAPQAPQSPPSR. Residues 101-315 form a domain II region; the sequence is QAPQSPPSRP…PATGPGEPTA (215 aa). 2 stretches are compositionally biased toward basic and acidic residues: residues 126-144 and 231-273; these read GREE…RNRA and QRGD…RDLP. The span at 291–313 shows a compositional bias: low complexity; it reads GPATGAPGPLAAQPAPATGPGEP. The domain III, AAA+ region stretch occupies residues 316-532; the sequence is RLNPKYLFDT…GALIRVTAFA (217 aa). ATP contacts are provided by G360, G362, K363, and T364. Positions 533–656 are domain IV, binds dsDNA; it reads SLNRQPVDLG…TELTNRIKNG (124 aa).

This sequence belongs to the DnaA family. In terms of assembly, oligomerizes as a right-handed, spiral filament on DNA at oriC.

The protein resides in the cytoplasm. In terms of biological role, plays an essential role in the initiation and regulation of chromosomal replication. ATP-DnaA binds to the origin of replication (oriC) to initiate formation of the DNA replication initiation complex once per cell cycle. Binds the DnaA box (a 9 base pair repeat at the origin) and separates the double-stranded (ds)DNA. Forms a right-handed helical filament on oriC DNA; dsDNA binds to the exterior of the filament while single-stranded (ss)DNA is stabiized in the filament's interior. The ATP-DnaA-oriC complex binds and stabilizes one strand of the AT-rich DNA unwinding element (DUE), permitting loading of DNA polymerase. After initiation quickly degrades to an ADP-DnaA complex that is not apt for DNA replication. Binds acidic phospholipids. The polypeptide is Chromosomal replication initiator protein DnaA (Streptomyces coelicolor (strain ATCC BAA-471 / A3(2) / M145)).